Here is a 498-residue protein sequence, read N- to C-terminus: Glycerol kinase (498 aa).

Thr13 contributes to the ADP binding site. Thr13, Thr14, and Ser15 together coordinate ATP. Thr13 contacts sn-glycerol 3-phosphate. Arg17 provides a ligand contact to ADP. Sn-glycerol 3-phosphate-binding residues include Arg83, Glu84, Tyr135, and Asp244. The glycerol site is built by Arg83, Glu84, Tyr135, Asp244, and Gln245. Thr266 and Gly309 together coordinate ADP. ATP-binding residues include Thr266, Gly309, Gln313, and Gly410. ADP is bound by residues Gly410 and Asn414.

The protein belongs to the FGGY kinase family. As to quaternary structure, homotetramer and homodimer (in equilibrium).

It carries out the reaction glycerol + ATP = sn-glycerol 3-phosphate + ADP + H(+). Its pathway is polyol metabolism; glycerol degradation via glycerol kinase pathway; sn-glycerol 3-phosphate from glycerol: step 1/1. Activated by phosphorylation and inhibited by fructose 1,6-bisphosphate (FBP). Its function is as follows. Key enzyme in the regulation of glycerol uptake and metabolism. Catalyzes the phosphorylation of glycerol to yield sn-glycerol 3-phosphate. The protein is Glycerol kinase of Symbiobacterium thermophilum (strain DSM 24528 / JCM 14929 / IAM 14863 / T).